Consider the following 77-residue polypeptide: Large ribosomal subunit protein uL24 (77 aa).

The protein belongs to the universal ribosomal protein uL24 family. In terms of assembly, part of the 50S ribosomal subunit.

Its function is as follows. One of two assembly initiator proteins, it binds directly to the 5'-end of the 23S rRNA, where it nucleates assembly of the 50S subunit. In terms of biological role, one of the proteins that surrounds the polypeptide exit tunnel on the outside of the subunit. This is Large ribosomal subunit protein uL24 from Campylobacter jejuni subsp. doylei (strain ATCC BAA-1458 / RM4099 / 269.97).